Consider the following 331-residue polypeptide: Phospholipase A2 inhibitor (331 aa).

The signal sequence occupies residues 1–23 (MKSSVPSLLIACLVMSLNSYTQQ). The N-linked (GlcNAc...) asparagine glycan is linked to Asn-35. LRR repeat units follow at residues 78 to 101 (LPNLQELHLSNNRLKTLPSGLFRN), 103 to 125 (PQLHTLDLSTNHLEDLPPEIFTN), 127 to 149 (SSLILLPLSENQLAELHPSWFQT), 150 to 173 (LGELRILGLDHNQVKEIPISCFDK), 175 to 197 (KKLTSLDLSFNLLRRLAPEMFSG), 199 to 221 (DNLEKLILESNPIQCIVGRTFHW), 223 to 244 (PKLTVLSLKNSSLTNIMGFFQP), and 245 to 268 (LEQLELLDLSDNELTTMEPPVYKT). The N-linked (GlcNAc...) asparagine glycan is linked to Asn-125. Asn-232 carries N-linked (GlcNAc...) asparagine glycosylation. N-linked (GlcNAc...) asparagine glycosylation is present at Asn-271. An LRRCT domain is found at 279-330 (NPWACDCRLDNLLTWVNEHNIHLYSKEEIVCASPKHFKGECATSLHKSQICP).

Homotrimer.

It localises to the secreted. Its function is as follows. Inhibits the enzymatic activity of the basic phospholipase A2 (PLA2). The sequence is that of Phospholipase A2 inhibitor from Gloydius brevicaudus siniticus (Chinese mamushi).